Reading from the N-terminus, the 262-residue chain is Phosphatidylserine decarboxylase proenzyme (262 aa).

Active-site charge relay system; for autoendoproteolytic cleavage activity residues include D86, H142, and S226. S226 functions as the Schiff-base intermediate with substrate; via pyruvic acid; for decarboxylase activity in the catalytic mechanism. S226 carries the post-translational modification Pyruvic acid (Ser); by autocatalysis.

Belongs to the phosphatidylserine decarboxylase family. PSD-B subfamily. Prokaryotic type I sub-subfamily. In terms of assembly, heterodimer of a large membrane-associated beta subunit and a small pyruvoyl-containing alpha subunit. The cofactor is pyruvate. In terms of processing, is synthesized initially as an inactive proenzyme. Formation of the active enzyme involves a self-maturation process in which the active site pyruvoyl group is generated from an internal serine residue via an autocatalytic post-translational modification. Two non-identical subunits are generated from the proenzyme in this reaction, and the pyruvate is formed at the N-terminus of the alpha chain, which is derived from the carboxyl end of the proenzyme. The autoendoproteolytic cleavage occurs by a canonical serine protease mechanism, in which the side chain hydroxyl group of the serine supplies its oxygen atom to form the C-terminus of the beta chain, while the remainder of the serine residue undergoes an oxidative deamination to produce ammonia and the pyruvoyl prosthetic group on the alpha chain. During this reaction, the Ser that is part of the protease active site of the proenzyme becomes the pyruvoyl prosthetic group, which constitutes an essential element of the active site of the mature decarboxylase.

It is found in the cell membrane. It catalyses the reaction a 1,2-diacyl-sn-glycero-3-phospho-L-serine + H(+) = a 1,2-diacyl-sn-glycero-3-phosphoethanolamine + CO2. It functions in the pathway phospholipid metabolism; phosphatidylethanolamine biosynthesis; phosphatidylethanolamine from CDP-diacylglycerol: step 2/2. Functionally, catalyzes the formation of phosphatidylethanolamine (PtdEtn) from phosphatidylserine (PtdSer). This is Phosphatidylserine decarboxylase proenzyme from Bacillus mycoides (strain KBAB4) (Bacillus weihenstephanensis).